Consider the following 206-residue polypeptide: 3-isopropylmalate dehydratase small subunit (206 aa).

Belongs to the LeuD family. LeuD type 1 subfamily. In terms of assembly, heterodimer of LeuC and LeuD.

It catalyses the reaction (2R,3S)-3-isopropylmalate = (2S)-2-isopropylmalate. It functions in the pathway amino-acid biosynthesis; L-leucine biosynthesis; L-leucine from 3-methyl-2-oxobutanoate: step 2/4. Catalyzes the isomerization between 2-isopropylmalate and 3-isopropylmalate, via the formation of 2-isopropylmaleate. The chain is 3-isopropylmalate dehydratase small subunit from Leptospira borgpetersenii serovar Hardjo-bovis (strain L550).